A 160-amino-acid chain; its full sequence is Small ribosomal subunit protein uS9 (160 aa).

This sequence belongs to the universal ribosomal protein uS9 family.

This Xanthobacter autotrophicus (strain ATCC BAA-1158 / Py2) protein is Small ribosomal subunit protein uS9.